A 964-amino-acid polypeptide reads, in one-letter code: Coatomer subunit beta (964 aa).

HEAT repeat units lie at residues 129-166, 238-275, 314-351, 393-430, and 466-506; these read ELLE…NFDW, AERS…APTA, KVMQ…SRNI, DVAA…KFPA, and SQIL…QQGS. Over residues 490 to 501 the composition is skewed to basic and acidic residues; that stretch reads RRLAGDQTEEQK. The tract at residues 490–530 is disordered; the sequence is RRLAGDQTEEQKQQQGSAGGNAAGSAAEGSGSGNASNKVTS. Residues 512-526 are compositionally biased toward low complexity; that stretch reads AGSAAEGSGSGNASN.

In terms of assembly, oligomeric complex that consists of at least the alpha, beta, beta', gamma, delta, epsilon and zeta subunits. As to expression, during oogenesis and spermatogenesis, expressed in ovariole, germarium, testis tip and testis.

The protein resides in the cytoplasm. Its subcellular location is the golgi apparatus membrane. The protein localises to the cytoplasmic vesicle. It is found in the COPI-coated vesicle membrane. In terms of biological role, the coatomer is a cytosolic protein complex that binds to dilysine motifs and reversibly associates with Golgi non-clathrin-coated vesicles, which further mediate biosynthetic protein transport from the ER, via the Golgi up to the trans Golgi network. Coatomer complex is required for budding from Golgi membranes, and is essential for the retrograde Golgi-to-ER transport of dilysine-tagged proteins. Required for limiting lipid storage in lipid droplets. This chain is Coatomer subunit beta, found in Drosophila melanogaster (Fruit fly).